The following is a 451-amino-acid chain: MTTSDRLQPSFVEVKNTSTLSGTIDLPASKSSSTRALLTAALTPGISTIRNVATGFNSNAMKHNCERLGASFSSEGDTTVVKGVDVMHVDREIVFDPGNSGVVLRLLMGVAGYLPDTRFVTQYRYSLGVRSQAEMVAALRRLNVECEAVGPEARLPISMRSTRALGKHTEVSCKKSSQFLSGLLYLGAIGERDLEIDVVDHITAPSMVHTTINNLAHAGVAVEYDAAFRRFFVPGRDRFKPSEFTVGADPASTAAILALCGSLASDVTLNGFFEEELGSGAVIRYLTDTGTLIDELPGNRIRIRGGASIRAQDFDGSLAPDAVPALAGRAAFAEGTSTFYNIEHIRYKESDRISDFRRELDKLGVRSEEKLDQLIIHGNPRSYRGGAVVDGHYDHGLIMALTTIGLHCEHPVLIKEPHHVGQTYPDYFADIGSIGANVDGLIYPNVAAARA.

Positions 30, 31, and 35 each coordinate 3-phosphoshikimate. Position 30 (Lys30) interacts with phosphoenolpyruvate. 2 residues coordinate phosphoenolpyruvate: Gly101 and Arg130. 3-phosphoshikimate contacts are provided by Ser176, Ser177, Gln178, Asp321, and Lys348. Gln178 contacts phosphoenolpyruvate. Asp321 (proton acceptor) is an active-site residue. Arg352 and Gln422 together coordinate phosphoenolpyruvate.

The protein belongs to the EPSP synthase family. Monomer.

Its subcellular location is the cytoplasm. It carries out the reaction 3-phosphoshikimate + phosphoenolpyruvate = 5-O-(1-carboxyvinyl)-3-phosphoshikimate + phosphate. The protein operates within metabolic intermediate biosynthesis; chorismate biosynthesis; chorismate from D-erythrose 4-phosphate and phosphoenolpyruvate: step 6/7. In terms of biological role, catalyzes the transfer of the enolpyruvyl moiety of phosphoenolpyruvate (PEP) to the 5-hydroxyl of shikimate-3-phosphate (S3P) to produce enolpyruvyl shikimate-3-phosphate and inorganic phosphate. The protein is 3-phosphoshikimate 1-carboxyvinyltransferase of Burkholderia pseudomallei (strain K96243).